The primary structure comprises 358 residues: PqqA peptide cyclase (358 aa).

A Radical SAM core domain is found at 4–219; sequence PSPPMSLLAE…VEAERAKGGL (216 aa). [4Fe-4S] cluster contacts are provided by C18, C22, and C25.

Belongs to the radical SAM superfamily. PqqE family. As to quaternary structure, interacts with PqqD. The interaction is necessary for activity of PqqE. The cofactor is [4Fe-4S] cluster.

It carries out the reaction [PQQ precursor protein] + S-adenosyl-L-methionine = E-Y cross-linked-[PQQ precursor protein] + 5'-deoxyadenosine + L-methionine + H(+). The protein operates within cofactor biosynthesis; pyrroloquinoline quinone biosynthesis. Catalyzes the cross-linking of a glutamate residue and a tyrosine residue in the PqqA protein as part of the biosynthesis of pyrroloquinoline quinone (PQQ). The polypeptide is PqqA peptide cyclase (Gluconobacter oxydans (strain 621H) (Gluconobacter suboxydans)).